A 448-amino-acid polypeptide reads, in one-letter code: Protein chibby homolog 2 (448 aa).

A phosphoserine mark is found at S41, S86, S89, S97, S124, S144, S148, and S150. Residues 163–198 (AKEFVLQEENKSLREENKALREENRMLRKENKILQV) are a coiled coil. The segment at 206–226 (SLGREESRPPSPLPQKDSASL) is disordered. Phosphoserine is present on residues S212 and S225. A coiled-coil region spans residues 242–267 (KEDSTLQLLREENRALQQLLEQKQAY). The disordered stretch occupies residues 270–321 (QTEDAAAPAEESKPAPSPHEEPCSPGLLQDQGSGLSSHFEEPRGPPAPQEDS). Residues 279 to 291 (EESKPAPSPHEEP) are compositionally biased toward basic and acidic residues. Phosphoserine occurs at positions 335 and 338. Residues 356–414 (LQLLREMRQALQALLKENRLLQEENRTLQVLRAEHRGFQEENKALWENNKLKLQQKLVI) are a coiled coil.

Belongs to the chibby family. SPERT subfamily. As to quaternary structure, homodimer. Binds to NEK1.

This chain is Protein chibby homolog 2 (CBY2), found in Macaca fascicularis (Crab-eating macaque).